The primary structure comprises 500 residues: MAQPTSGLYSTFGFFICLLFFPASWEAGANTFQELQKTGEPPKFDHLLPLTQGLTHRASSDQKTSRQHPPDLPEATATQKAKNQCNTTRLVKPVHTPLDNAKAADYGNTTVRHEMPPASEKDLSSQGKHLMARNERSADDPRSTTSENGSDGKRLTSAPRRNTSCMPSTRRTSLTTKSGMRASPMGASASLRTTSQKPTTFHVSELIRQSSSPVYATETPRTSYNTLKTLTTSGPEHHTIPFASDKSVQITTEHIKEATSASEITRTQSTFTKYEGKTSPASESSSQAQVLPIKHHTTSASENTIPVSAKSTPSTEKATKPTASPTVFQRKTIVATKTVRATRTSERTPVFLETTQPAKATEDKSSTVPSHVHKTETMHQGTVGSLTSRTNLGLSTSEAHYPQQSTHSLPGGLHAAGETGENNSFPVWAIVIVILMAVIILLVFIGLILLVSCASRARHVLTQNSEEPEPQPEDKGSRNSYPVYLMEQQNLNLNQIPSPP.

The N-terminal stretch at 1-27 (MAQPTSGLYSTFGFFICLLFFPASWEA) is a signal peptide. Topologically, residues 28 to 429 (GANTFQELQK…GENNSFPVWA (402 aa)) are extracellular. 2 disordered regions span residues 55–198 (THRA…SQKP) and 275–324 (EGKT…PTAS). The span at 58 to 71 (ASSDQKTSRQHPPD) shows a compositional bias: basic and acidic residues. The span at 76 to 89 (TATQKAKNQCNTTR) shows a compositional bias: polar residues. Asn-108 is a glycosylation site (N-linked (GlcNAc...) asparagine). Composition is skewed to basic and acidic residues over residues 111–123 (VRHE…EKDL) and 132–142 (ARNERSADDPR). Residue Asn-148 is glycosylated (N-linked (GlcNAc...) asparagine). 3 stretches are compositionally biased toward polar residues: residues 159–178 (PRRN…TTKS), 279–289 (SPASESSSQAQ), and 298–324 (TSAS…PTAS). The chain crosses the membrane as a helical span at residues 430-450 (IVIVILMAVIILLVFIGLILL). The Cytoplasmic segment spans residues 451–500 (VSCASRARHVLTQNSEEPEPQPEDKGSRNSYPVYLMEQQNLNLNQIPSPP).

Its subcellular location is the cell membrane. It localises to the cytoplasm. In terms of biological role, may modulate NF-kappaB signaling and play a role in cell growth. The polypeptide is Mucin-like protein 3 (Mus musculus (Mouse)).